A 429-amino-acid polypeptide reads, in one-letter code: Enolase (429 aa).

A (2R)-2-phosphoglycerate-binding site is contributed by glutamine 162. The Proton donor role is filled by glutamate 204. 3 residues coordinate Mg(2+): aspartate 241, glutamate 283, and aspartate 310. Residues lysine 335, arginine 364, serine 365, and lysine 386 each coordinate (2R)-2-phosphoglycerate. Lysine 335 serves as the catalytic Proton acceptor.

The protein belongs to the enolase family. It depends on Mg(2+) as a cofactor.

It is found in the cytoplasm. The protein resides in the secreted. It localises to the cell surface. The catalysed reaction is (2R)-2-phosphoglycerate = phosphoenolpyruvate + H2O. The protein operates within carbohydrate degradation; glycolysis; pyruvate from D-glyceraldehyde 3-phosphate: step 4/5. Functionally, catalyzes the reversible conversion of 2-phosphoglycerate (2-PG) into phosphoenolpyruvate (PEP). It is essential for the degradation of carbohydrates via glycolysis. The protein is Enolase of Mycobacterium bovis (strain BCG / Pasteur 1173P2).